The sequence spans 403 residues: Na(+)-translocating NADH-quinone reductase subunit B (403 aa).

Helical transmembrane passes span 56–76, 121–141, 163–183, 220–240, 258–278, 287–307, 312–332, 348–368, and 371–391; these read MMIT…WNTG, AYFL…EVLF, ILPP…GVVI, WTAV…AGGI, IHGS…AVLI, IVTG…LIGS, LFGM…GMIF, WVFG…NPAF, and GMML…HFVI. An FMN phosphoryl threonine modification is found at T230.

It belongs to the NqrB/RnfD family. Composed of six subunits; NqrA, NqrB, NqrC, NqrD, NqrE and NqrF. The cofactor is FMN.

It localises to the cell inner membrane. It catalyses the reaction a ubiquinone + n Na(+)(in) + NADH + H(+) = a ubiquinol + n Na(+)(out) + NAD(+). Its function is as follows. NQR complex catalyzes the reduction of ubiquinone-1 to ubiquinol by two successive reactions, coupled with the transport of Na(+) ions from the cytoplasm to the periplasm. NqrA to NqrE are probably involved in the second step, the conversion of ubisemiquinone to ubiquinol. This chain is Na(+)-translocating NADH-quinone reductase subunit B, found in Stutzerimonas stutzeri (strain A1501) (Pseudomonas stutzeri).